We begin with the raw amino-acid sequence, 320 residues long: Pyrroline-5-carboxylate reductase 1, mitochondrial (320 aa).

Position 2 is an N-acetylserine (Ser2). NADP(+) is bound by residues 6–11 (IGAGQL) and Ser34. Residues Ala8, Gln10, Leu11, Ser34, Asp36, Asn56, Val70, Lys71, and Ala97 each contribute to the NADPH site. NADP(+) is bound by residues Asn56, 69–72 (AVKP), and 95–97 (CAA). Glu164 serves as a coordination point for L-proline. Asn230 provides a ligand contact to NADPH. L-proline contacts are provided by Ala237 and Thr238. A Phosphoserine modification is found at Ser278. The interval 292 to 320 (LDSPPGTSLAPSGHSKLLPRSMAPAGKQD) is disordered.

The protein belongs to the pyrroline-5-carboxylate reductase family. Homodecamer; composed of 5 homodimers. Interacts with LTO1.

It localises to the mitochondrion. It carries out the reaction L-proline + NADP(+) = (S)-1-pyrroline-5-carboxylate + NADPH + 2 H(+). It catalyses the reaction L-proline + NAD(+) = (S)-1-pyrroline-5-carboxylate + NADH + 2 H(+). The protein operates within amino-acid biosynthesis; L-proline biosynthesis; L-proline from L-glutamate 5-semialdehyde: step 1/1. Oxidoreductase that catalyzes the last step in proline biosynthesis, which corresponds to the reduction of pyrroline-5-carboxylate to L-proline using NAD(P)H. At physiologic concentrations, has higher specific activity in the presence of NADH. Involved in the cellular response to oxidative stress. This chain is Pyrroline-5-carboxylate reductase 1, mitochondrial (PYCR1), found in Bos taurus (Bovine).